We begin with the raw amino-acid sequence, 95 residues long: Ribonuclease kappa-B (95 aa).

2 helical membrane passes run 12-32 (GLII…FFYI) and 68-88 (CWIA…QFYV).

This sequence belongs to the RNase K family.

The protein localises to the membrane. Inhibited by Zn(2+) and Hg(2+), while it is unaffected by Ca(2+). Endoribonuclease which displays activity against poly(C) and poly(U) synthetic substrates, as well as rRNA. In Ceratitis capitata (Mediterranean fruit fly), this protein is Ribonuclease kappa-B.